A 77-amino-acid chain; its full sequence is MKLMIFTGLVLFAIVSLIEAQAENEKPCLPEYKVRTHAPGNCCSDLVCDCYGRYKSGAQIGRNCFCLQKGVIYKREN.

An N-terminal signal peptide occupies residues 1–20; that stretch reads MKLMIFTGLVLFAIVSLIEA. Positions 21–26 are excised as a propeptide; it reads QAENEK.

This sequence belongs to the neurotoxin 19 (CSTX) family. 08 (U8-Lctx) subfamily. Contains 4 disulfide bonds. In terms of tissue distribution, expressed by the venom gland.

It localises to the secreted. The polypeptide is U8-lycotoxin-Ls1l (Lycosa singoriensis (Wolf spider)).